The sequence spans 199 residues: Hematopoietic prostaglandin D synthase (199 aa).

The region spanning 2–79 (PNYKLTYFNM…YLTKNTDLAG (78 aa)) is the GST N-terminal domain. Glutathione is bound by residues tyrosine 8, arginine 14, tryptophan 39, 49–51 (GKI), and 63–64 (QS). In terms of domain architecture, GST C-terminal spans 81–199 (TEMEQCHVDA…WIKRRPQTKL (119 aa)).

It belongs to the GST superfamily. Sigma family. Homodimer. The cofactor is glutathione. Expressed in a number of megakaryocytic cell lines but not in platelets. Highly expressed in adipose tissue, macrophages and placenta. Also expressed at lower levels in lung, heart, lymph nodes, appendix, bone marrow and fetal liver.

The protein resides in the cytoplasm. The enzyme catalyses prostaglandin H2 = prostaglandin D2. The catalysed reaction is RX + glutathione = an S-substituted glutathione + a halide anion + H(+). It carries out the reaction 2-glyceryl-prostaglandin H2 = 2-glyceryl-prostaglandin D2. Its activity is regulated as follows. Prostaglandin PGD2 synthesis is stimulated by calcium and magnesium ions. One calcium or magnesium ion is bound between the subunits of the homodimer. The interactions with the protein are for the most part mediated via water molecules. Magnesium increases the affinity for glutathione, while calcium has no effect on the affinity for glutathione. In terms of biological role, bifunctional enzyme which catalyzes both the conversion of PGH2 to PGD2, a prostaglandin involved in smooth muscle contraction/relaxation and a potent inhibitor of platelet aggregation, and the conjugation of glutathione with a wide range of aryl halides and organic isothiocyanates. Also exhibits low glutathione-peroxidase activity towards cumene hydroperoxide. This chain is Hematopoietic prostaglandin D synthase, found in Homo sapiens (Human).